A 238-amino-acid chain; its full sequence is Small ribosomal subunit protein uS2 (238 aa).

Belongs to the universal ribosomal protein uS2 family.

The protein is Small ribosomal subunit protein uS2 of Synechococcus sp. (strain CC9605).